Reading from the N-terminus, the 460-residue chain is Kynureninase (460 aa).

Pyridoxal 5'-phosphate contacts are provided by residues Leu127, Thr128, 165–168, Asp249, His252, and Tyr274; that span reads FPSD. Lys275 carries the N6-(pyridoxal phosphate)lysine modification. The pyridoxal 5'-phosphate site is built by Trp304 and Asn332.

Belongs to the kynureninase family. In terms of assembly, homodimer. The cofactor is pyridoxal 5'-phosphate.

The protein resides in the cytoplasm. The enzyme catalyses L-kynurenine + H2O = anthranilate + L-alanine + H(+). It catalyses the reaction 3-hydroxy-L-kynurenine + H2O = 3-hydroxyanthranilate + L-alanine + H(+). The protein operates within amino-acid degradation; L-kynurenine degradation; L-alanine and anthranilate from L-kynurenine: step 1/1. Its pathway is cofactor biosynthesis; NAD(+) biosynthesis; quinolinate from L-kynurenine: step 2/3. In terms of biological role, catalyzes the cleavage of L-kynurenine (L-Kyn) and L-3-hydroxykynurenine (L-3OHKyn) into anthranilic acid (AA) and 3-hydroxyanthranilic acid (3-OHAA), respectively. The chain is Kynureninase from Monosiga brevicollis (Choanoflagellate).